A 385-amino-acid chain; its full sequence is Probable endopeptidase MT2245 (385 aa).

The segment covering 235 to 257 has biased composition (pro residues); it reads AALPPGAPPGDGPAPGVAPPPGG. The segment at 235-268 is disordered; it reads AALPPGAPPGDGPAPGVAPPPGGMPGLPFVQPDG. In terms of domain architecture, NlpC/P60 spans 270-385; sequence GGDRTAVVQA…SGPIYDARRY (116 aa). The Nucleophile role is filled by cysteine 300. The active-site Proton acceptor is the histidine 348. Histidine 360 is an active-site residue.

It belongs to the peptidase C40 family.

This chain is Probable endopeptidase MT2245, found in Mycobacterium tuberculosis (strain CDC 1551 / Oshkosh).